A 234-amino-acid polypeptide reads, in one-letter code: CD-NTase-associated protein 13 (234 aa).

The chain crosses the membrane as a helical span at residues 20-42 (TIMKNVIANVSTAITLALMILWI).

This sequence in the C-terminal section; belongs to the bacterial STING family.

Its subcellular location is the cell inner membrane. Its function is as follows. Effector protein of a CBASS antivirus system. CBASS (cyclic oligonucleotide-based antiphage signaling system) provides immunity against bacteriophage. The CD-NTase protein synthesizes cyclic nucleotides in response to infection; these serve as specific second messenger signals. The signals activate a diverse range of effectors, leading to bacterial cell death and thus abortive phage infection. A type I-D CBASS(GG) system. Binds c-di-GMP (synthesized by the cognate CdnE encoded upstream in the same operon) and about 10-fold less well 3'3'-cGAMP, but not c-di-AMP, 2'3'-cGAMP or cUMP-AMP (tested with a protein without the transmembrane region). The effector protein for this CBASS system, its activity is stimulated by c-di-GMP and leads to cell death. In Roseivirga ehrenbergii (strain DSM 102268 / JCM 13514 / KCTC 12282 / NCIMB 14502 / KMM 6017), this protein is CD-NTase-associated protein 13.